Here is a 328-residue protein sequence, read N- to C-terminus: 4-hydroxythreonine-4-phosphate dehydrogenase (328 aa).

Residues histidine 130 and threonine 131 each coordinate substrate. Positions 163, 208, and 263 each coordinate a divalent metal cation. The substrate site is built by lysine 271, asparagine 280, and arginine 289.

Belongs to the PdxA family. As to quaternary structure, homodimer. It depends on Zn(2+) as a cofactor. Requires Mg(2+) as cofactor. Co(2+) serves as cofactor.

The protein localises to the cytoplasm. The catalysed reaction is 4-(phosphooxy)-L-threonine + NAD(+) = 3-amino-2-oxopropyl phosphate + CO2 + NADH. It functions in the pathway cofactor biosynthesis; pyridoxine 5'-phosphate biosynthesis; pyridoxine 5'-phosphate from D-erythrose 4-phosphate: step 4/5. In terms of biological role, catalyzes the NAD(P)-dependent oxidation of 4-(phosphooxy)-L-threonine (HTP) into 2-amino-3-oxo-4-(phosphooxy)butyric acid which spontaneously decarboxylates to form 3-amino-2-oxopropyl phosphate (AHAP). The chain is 4-hydroxythreonine-4-phosphate dehydrogenase from Burkholderia vietnamiensis (strain G4 / LMG 22486) (Burkholderia cepacia (strain R1808)).